The following is a 387-amino-acid chain: Phosphoglycerate kinase (387 aa).

Substrate contacts are provided by residues 21-23, R36, and 59-62; these read DLN and HLGR. K84 bears the N6-acetyllysine mark. The substrate site is built by R113 and R146. ATP-binding positions include K197, E314, and 340–343; that span reads GGDT.

This sequence belongs to the phosphoglycerate kinase family. As to quaternary structure, monomer.

It localises to the cytoplasm. The enzyme catalyses (2R)-3-phosphoglycerate + ATP = (2R)-3-phospho-glyceroyl phosphate + ADP. It functions in the pathway carbohydrate degradation; glycolysis; pyruvate from D-glyceraldehyde 3-phosphate: step 2/5. This Escherichia coli O9:H4 (strain HS) protein is Phosphoglycerate kinase.